The following is a 442-amino-acid chain: Serine protease AprX (442 aa).

Residues 122–439 (KALLDTATEA…AGAVNAENSV (318 aa)) form the Peptidase S8 domain. Active-site charge relay system residues include Asp155 and His187. Positions 318-337 (DNNTASSDDDTVASFSSRGP) are disordered. The active-site Charge relay system is Ser384. The disordered stretch occupies residues 423–442 (EDPNIYGAGAVNAENSVPGQ).

It belongs to the peptidase S8 family.

Its subcellular location is the cytoplasm. With respect to regulation, is completely inhibited by phenylmethanesulphonylfluoride (PMSF) in vitro. Displays serine protease activity. Seems to have a broad substrate specificity. This is Serine protease AprX (aprX) from Bacillus subtilis (strain 168).